Consider the following 320-residue polypeptide: Putative GDP-polyphosphate phosphotransferase PKK2A (320 aa).

Disordered stretches follow at residues 1–21 (MRKK…PKLD), 246–267 (RPLP…PPRD), and 281–320 (EERI…KSKK). The span at 12–21 (DFRKNPPKLD) shows a compositional bias: basic and acidic residues. Positions 281 to 290 (EERIKKEEKA) are enriched in basic and acidic residues.

Belongs to the polyphosphate kinase 2 (PPK2) family. Class I subfamily.

It catalyses the reaction [phosphate](n) + GTP = [phosphate](n+1) + GDP. The protein is Putative GDP-polyphosphate phosphotransferase PKK2A of Corynebacterium glutamicum (strain ATCC 13032 / DSM 20300 / JCM 1318 / BCRC 11384 / CCUG 27702 / LMG 3730 / NBRC 12168 / NCIMB 10025 / NRRL B-2784 / 534).